Here is a 417-residue protein sequence, read N- to C-terminus: Imidazolonepropionase (417 aa).

Fe(3+) is bound by residues histidine 77 and histidine 79. Residues histidine 77 and histidine 79 each contribute to the Zn(2+) site. 4-imidazolone-5-propanoate contacts are provided by arginine 86, tyrosine 149, and histidine 182. Position 149 (tyrosine 149) interacts with N-formimidoyl-L-glutamate. Histidine 247 contacts Fe(3+). Histidine 247 lines the Zn(2+) pocket. Glutamine 250 contributes to the 4-imidazolone-5-propanoate binding site. Aspartate 322 contributes to the Fe(3+) binding site. Aspartate 322 serves as a coordination point for Zn(2+). Positions 324 and 326 each coordinate N-formimidoyl-L-glutamate. A 4-imidazolone-5-propanoate-binding site is contributed by threonine 327.

This sequence belongs to the metallo-dependent hydrolases superfamily. HutI family. Zn(2+) is required as a cofactor. The cofactor is Fe(3+).

The protein resides in the cytoplasm. It carries out the reaction 4-imidazolone-5-propanoate + H2O = N-formimidoyl-L-glutamate. Its pathway is amino-acid degradation; L-histidine degradation into L-glutamate; N-formimidoyl-L-glutamate from L-histidine: step 3/3. Catalyzes the hydrolytic cleavage of the carbon-nitrogen bond in imidazolone-5-propanoate to yield N-formimidoyl-L-glutamate. It is the third step in the universal histidine degradation pathway. The sequence is that of Imidazolonepropionase from Cupriavidus necator (strain ATCC 17699 / DSM 428 / KCTC 22496 / NCIMB 10442 / H16 / Stanier 337) (Ralstonia eutropha).